Reading from the N-terminus, the 94-residue chain is Co-chaperonin GroES (94 aa).

It belongs to the GroES chaperonin family. In terms of assembly, heptamer of 7 subunits arranged in a ring. Interacts with the chaperonin GroEL.

The protein resides in the cytoplasm. Together with the chaperonin GroEL, plays an essential role in assisting protein folding. The GroEL-GroES system forms a nano-cage that allows encapsulation of the non-native substrate proteins and provides a physical environment optimized to promote and accelerate protein folding. GroES binds to the apical surface of the GroEL ring, thereby capping the opening of the GroEL channel. This chain is Co-chaperonin GroES, found in Bacillus pumilus (strain SAFR-032).